The sequence spans 624 residues: Alpha-galactosidase 3 (624 aa).

The first 22 residues, 1–22 (MSPSAAVLIPLAAAVLLRPVVG), serve as a signal peptide directing secretion. N-linked (GlcNAc...) asparagine glycosylation is found at asparagine 37, asparagine 56, asparagine 197, asparagine 259, and asparagine 293. Residue aspartate 347 is the Nucleophile of the active site. Asparagine 393 carries N-linked (GlcNAc...) asparagine glycosylation. Aspartate 412 (proton donor) is an active-site residue. Asparagine 469 carries N-linked (GlcNAc...) asparagine glycosylation.

It belongs to the glycosyl hydrolase 27 family.

It is found in the secreted. The enzyme catalyses Hydrolysis of terminal, non-reducing alpha-D-galactose residues in alpha-D-galactosides, including galactose oligosaccharides, galactomannans and galactolipids.. Its function is as follows. Alpha-galactosidase involved in the degradation of simple oligosaccharides like melibiose, raffinose and stachyose, and of polymeric galacto(gluco)mannans. This is Alpha-galactosidase 3 (agl3) from Hypocrea jecorina (Trichoderma reesei).